The sequence spans 322 residues: Sideroflexin-1 (322 aa).

S2 is subject to N-acetylserine. Residues S2–T102 are Mitochondrial matrix-facing. Residues I103 to W120 traverse the membrane as a helical segment. The Mitochondrial intermembrane segment spans residues Q121–E146. The chain crosses the membrane as a helical span at residues L147–A167. Topologically, residues L168–P174 are mitochondrial matrix. Residues L175–L195 form a helical membrane-spanning segment. At M196 to Q228 the chain is on the mitochondrial intermembrane side. Residues V229 to N249 traverse the membrane as a helical segment. Residues T250–P266 lie on the Mitochondrial matrix side of the membrane. Residues I267–F287 traverse the membrane as a helical segment. The Mitochondrial intermembrane segment spans residues P288 to L322.

It belongs to the sideroflexin family. Widely expressed, with highest expression in kidney and liver.

The protein localises to the mitochondrion inner membrane. It catalyses the reaction L-serine(in) = L-serine(out). The enzyme catalyses L-alanine(in) = L-alanine(out). The catalysed reaction is L-cysteine(in) = L-cysteine(out). In terms of biological role, amino acid transporter importing serine, an essential substrate of the mitochondrial branch of the one-carbon pathway, into mitochondria. Mitochondrial serine is then converted to glycine and formate, which exits to the cytosol where it is used to generate the charged folates that serve as one-carbon donors. May also transport other amino acids including alanine and cysteine. This is Sideroflexin-1 from Mus musculus (Mouse).